Consider the following 358-residue polypeptide: MTALKNDRFLRALLREPVDTTPVWMMRQAGRYLPEYRETRAQAGDFLSLCKNTEFACEVTLQPLRRYDLDAAILFSDILTIPDALGLGLYFETGEGPKFKKTIRTEQDVLNLPNFNAKSDLDYVMNAVTTIHSALGGQVPLIGFSGSPWTLATYMVEGGSSKDFRYTKHMMYSQPEVLHALLDRLAVAVIDYLNAQIDAGAQAVQIFDSWGGALAHREYTEFSLNYMRKIVAGLQREKDGRRIPVILFTKGGGQWLEPMIATGADAIGLDWTTPLNVARKTVAGRVALQGNLDPAVLYGSAASIEKSVKAMLDDAYANGETTGYIANLGHGITQWVDPSQPKIFVDTVHEYSAKYLGS.

Substrate contacts are provided by residues 27–31, Asp-77, Tyr-154, Ser-209, and His-330; that span reads RQAGR.

The protein belongs to the uroporphyrinogen decarboxylase family. In terms of assembly, homodimer.

The protein resides in the cytoplasm. The enzyme catalyses uroporphyrinogen III + 4 H(+) = coproporphyrinogen III + 4 CO2. It functions in the pathway porphyrin-containing compound metabolism; protoporphyrin-IX biosynthesis; coproporphyrinogen-III from 5-aminolevulinate: step 4/4. Functionally, catalyzes the decarboxylation of four acetate groups of uroporphyrinogen-III to yield coproporphyrinogen-III. The protein is Uroporphyrinogen decarboxylase of Acinetobacter baylyi (strain ATCC 33305 / BD413 / ADP1).